Here is a 369-residue protein sequence, read N- to C-terminus: Uroporphyrinogen decarboxylase (369 aa).

Coproporphyrinogen I-binding residues include Arg39, Ala41, Arg43, Arg52, Asp88, Tyr166, Ser221, and His341. Positions 39, 41, and 43 each coordinate coproporphyrinogen III. Residues Asp88, Tyr166, Ser221, and His341 each contribute to the coproporphyrinogen III site.

The protein belongs to the uroporphyrinogen decarboxylase family. As to quaternary structure, homodimer.

The protein localises to the cytoplasm. It is found in the cytosol. The enzyme catalyses uroporphyrinogen III + 4 H(+) = coproporphyrinogen III + 4 CO2. The catalysed reaction is uroporphyrinogen I + 4 H(+) = coproporphyrinogen I + 4 CO2. It participates in porphyrin-containing compound metabolism; protoporphyrin-IX biosynthesis; coproporphyrinogen-III from 5-aminolevulinate: step 4/4. Its function is as follows. Catalyzes the sequential decarboxylation of the four acetate side chains of uroporphyrinogen to form coproporphyrinogen and participates in the fifth step in the heme biosynthetic pathway. Isomer I or isomer III of uroporphyrinogen may serve as substrate, but only coproporphyrinogen III can ultimately be converted to heme. In vitro also decarboxylates pentacarboxylate porphyrinogen I. The chain is Uroporphyrinogen decarboxylase from Danio rerio (Zebrafish).